Reading from the N-terminus, the 147-residue chain is Large ribosomal subunit protein bL9 (147 aa).

Belongs to the bacterial ribosomal protein bL9 family.

In terms of biological role, binds to the 23S rRNA. This is Large ribosomal subunit protein bL9 from Caldanaerobacter subterraneus subsp. tengcongensis (strain DSM 15242 / JCM 11007 / NBRC 100824 / MB4) (Thermoanaerobacter tengcongensis).